We begin with the raw amino-acid sequence, 156 residues long: Cyanate hydratase (156 aa).

Active-site residues include arginine 96, glutamate 99, and serine 122.

This sequence belongs to the cyanase family.

It carries out the reaction cyanate + hydrogencarbonate + 3 H(+) = NH4(+) + 2 CO2. Functionally, catalyzes the reaction of cyanate with bicarbonate to produce ammonia and carbon dioxide. This is Cyanate hydratase from Pseudomonas fluorescens (strain ATCC BAA-477 / NRRL B-23932 / Pf-5).